We begin with the raw amino-acid sequence, 184 residues long: Peptide deformylase (184 aa).

Residues cysteine 99 and histidine 141 each contribute to the Fe cation site. Glutamate 142 is a catalytic residue. Histidine 145 contacts Fe cation.

This sequence belongs to the polypeptide deformylase family. Requires Fe(2+) as cofactor.

The catalysed reaction is N-terminal N-formyl-L-methionyl-[peptide] + H2O = N-terminal L-methionyl-[peptide] + formate. In terms of biological role, removes the formyl group from the N-terminal Met of newly synthesized proteins. Requires at least a dipeptide for an efficient rate of reaction. N-terminal L-methionine is a prerequisite for activity but the enzyme has broad specificity at other positions. The sequence is that of Peptide deformylase from Chlamydia abortus (strain DSM 27085 / S26/3) (Chlamydophila abortus).